The following is a 722-amino-acid chain: MEKNGNNRKLRVCVATCNRADYSKLAPIMFGIKTEPAFFELDVVVLGSHLIDDYGNTYRMIEQDDFDINTRLHTIVRGEDEAAMVESVGLALVKLPDVLNRLKPDIMIVHGDRFDALALATSAALMNIRILHIEGGEVSGTIDDSIRHAITKLAHYHVCCTRSAEQHLISMCEDHDRILLAGCPSYDKLLSAKNKDYMSIIRMWLGDDVKCKDYIVALQHPVTTDIKHSIKMFELTLDALISFNKRTLVLFPNIDAGSKEMVRVMRKKGIEHHPNFRAVKHVPFDQFIQLVAHAGCMIGNSSCGVREVGAFGTPVINLGTRQIGRETGENVLHVRDADTQDKILQALHLQFGKQYPCSKIYGDGNAVPRILKFLKSIDLQEPLQKKFCFPPVKENISQDIDHILETLSALAVDLGGTNLRVAIVSMKGEIVKKYTQFNPKTYEERISLILQMCVEAAAEAVKLNCRILGVGISTGGRVNPQEGVVLHSTKLIQEWNSVDLRTPLSDTLHLPVWVDNDGNCAAMAERKFGQGKGQENFVTLITGTGIGGGIIHQHELIHGSSFCAAELGHLVVSLDGPDCSCGSHGCIEAYASGMALQREAKKLHDEDLLLVEGMSVPKDEAVGALHLIQAAKLGNVKAQSILRTAGTALGLGVVNILHTMNPSLVILSGVLASHYIHIVKDVIRQQALSSVQDVDVVVSDLVDPALLGAASMVLDYTTRRIH.

Residues Arg19, Ser23, Arg113, His220, and Asn253 each coordinate UDP. Residues Lys259, Glu271, Lys280, and His281 each contribute to the CMP-N-acetyl-beta-neuraminate site. Val282, Ser301, Ser302, Glu307, and Arg321 together coordinate UDP. The interval 406–722 (TLSALAVDLG…VLDYTTRRIH (317 aa)) is N-acetylmannosamine kinase. Asp413 is a binding site for Mg(2+). Gly416 contacts an N-acyl-D-mannosamine 6-phosphate. Residues Thr417, Asn418, and Arg420 each contribute to the ADP site. An N-acyl-D-mannosamine 6-phosphate-binding residues include Gly476, Arg477, Thr489, Asn516, Asp517, and Gly545. The an N-acyl-D-mannosamine site is built by Gly476, Arg477, Thr489, Asn516, and Asp517. Asp517 is an active-site residue. Positions 566 and 569 each coordinate an N-acyl-D-mannosamine. Residue His569 coordinates an N-acyl-D-mannosamine 6-phosphate. Zn(2+) is bound by residues His569, Cys579, Cys581, and Cys586. Glu588 is a binding site for an N-acyl-D-mannosamine 6-phosphate. Residue Glu588 coordinates an N-acyl-D-mannosamine.

This sequence in the N-terminal section; belongs to the UDP-N-acetylglucosamine 2-epimerase family. In the C-terminal section; belongs to the ROK (NagC/XylR) family. As to quaternary structure, homodimer. Homotetramer. Homohexamer. The hexameric form exhibits both enzyme activities, whereas the dimeric form only catalyzes the phosphorylation of N-acyl-D-mannosamine. Phosphorylated. Phosphorylation by PKC activates the UDP-N-acetylglucosamine 2-epimerase activity. In terms of tissue distribution, widely expressed. Highest expression in liver. Also found at high levels in lung, brain and kidney.

The protein localises to the cytoplasm. It localises to the cytosol. It carries out the reaction UDP-N-acetyl-alpha-D-glucosamine + H2O = aldehydo-N-acetyl-D-mannosamine + UDP + H(+). It catalyses the reaction an N-acyl-D-mannosamine + ATP = an N-acyl-D-mannosamine 6-phosphate + ADP + H(+). It functions in the pathway amino-sugar metabolism; N-acetylneuraminate biosynthesis. The UDP-N-acetylglucosamine 2-epimerase activity, in contrast to the N-acetylmannosamine kinase activity, exhibits allosteric regulation by cytidine monophosphate-N-acetylneuraminic acid (CMP-Neu5Ac), the end product of neuraminic acid biosynthesis. Moreover, the activity is contingent upon the oligomeric state of the enzyme. The monomeric form is inactive, while the dimeric form selectively catalyzes the phosphorylation of N-acetylmannosamine. The hexameric form, on the other hand, demonstrates full proficiency in both enzyme activities. Furthermore, the UDP-N-acetylglucosamine 2-epimerase activity is increased by PKC-mediated phosphorylation. Functionally, bifunctional enzyme that possesses both UDP-N-acetylglucosamine 2-epimerase and N-acetylmannosamine kinase activities, and serves as the initiator of the biosynthetic pathway leading to the production of N-acetylneuraminic acid (NeuAc), a critical precursor in the synthesis of sialic acids. By catalyzing this pivotal and rate-limiting step in sialic acid biosynthesis, this enzyme assumes a pivotal role in governing the regulation of cell surface sialylation, playing a role in embryonic angiogenesis. Sialic acids represent a category of negatively charged sugars that reside on the surface of cells as terminal components of glycoconjugates and mediate important functions in various cellular processes, including cell adhesion, signal transduction, and cellular recognition. This Mus musculus (Mouse) protein is Bifunctional UDP-N-acetylglucosamine 2-epimerase/N-acetylmannosamine kinase.